Consider the following 366-residue polypeptide: ERCC4 domain-containing protein EP364R (366 aa).

An ERCC4 domain is found at 3-101 (FLVADHREHH…QLYFFVEGPA (99 aa)).

The protein belongs to the asfivirus EP364R family.

Its function is as follows. Plays a role in the inhibition of type I interferon signaling pathway. Mechanistically, specifically interacts with 2',3'-cGAMP and cleaves it via its phosphodiesterase activity. In turn, prevents 2',3'-cGAMP interaction with host ER-resident STING1 leading to inhibition of downstream signaling pathway and type I interferon production. The protein is ERCC4 domain-containing protein EP364R of African swine fever virus (isolate Pig/Kenya/KEN-50/1950) (ASFV).